A 281-amino-acid chain; its full sequence is 2-hydroxymuconate semialdehyde hydrolase (281 aa).

Residues Phe30–Ser55 are disordered. In terms of domain architecture, AB hydrolase-1 spans Pro31 to His261. Catalysis depends on residues Ser106, Asp227, and His255.

The protein belongs to the DmpD/TodF/XylF esterase family.

It catalyses the reaction (2Z,4E)-2-hydroxy-6-oxohexa-2,4-dienoate + H2O = 2-oxopent-4-enoate + formate + H(+). It participates in aromatic compound metabolism; benzoate degradation via hydroxylation. Its function is as follows. Catalyzes the conversion of 2-hydroxymuconate semialdehyde to 2-hydroxypent-2,4-dienoate. This chain is 2-hydroxymuconate semialdehyde hydrolase (xylF), found in Pseudomonas putida (Arthrobacter siderocapsulatus).